The chain runs to 532 residues: Tyrosinase (532 aa).

The N-terminal stretch at 1 to 22 (MESTTVLLAASTLLLVLHASYG) is a signal peptide. At 23 to 479 (QFPRACSTAQ…LEQARQIWQW (457 aa)) the chain is on the lumenal, melanosome side. N-linked (GlcNAc...) asparagine glycans are attached at residues asparagine 90, asparagine 115, and asparagine 165. Cu cation is bound by residues histidine 184, histidine 206, and histidine 215. N-linked (GlcNAc...) asparagine glycans are attached at residues asparagine 234 and asparagine 341. Residues histidine 367 and histidine 371 each coordinate Cu cation. An N-linked (GlcNAc...) asparagine glycan is attached at asparagine 375. Histidine 394 contacts Cu cation. The helical transmembrane segment at 480 to 500 (LLGAAVVGGLVTAVIATIISL) threads the bilayer. Topologically, residues 501 to 532 (TCRRKRRTKTSEETRPLLMEAEDYHATYQSNL) are cytoplasmic.

The protein belongs to the tyrosinase family. In terms of assembly, active tyrosinase has been found as a homodimer and homotetramer. Requires Cu(2+) as cofactor. In terms of tissue distribution, frog skin.

It is found in the melanosome membrane. The catalysed reaction is 2 L-dopa + O2 = 2 L-dopaquinone + 2 H2O. It catalyses the reaction L-tyrosine + O2 = L-dopaquinone + H2O. With respect to regulation, activated by trypsin, chymotrypsin and subtilisin. Activated by alpha-chymotrypsin, thermolysin and Pronase. Inhibited by its product L-DOPA and tyrosine. Its function is as follows. This is a copper-containing oxidase that functions in the formation of pigments such as melanins and other polyphenolic compounds. Catalyzes the initial and rate limiting step in the cascade of reactions leading to melanin production from tyrosine. In addition to hydroxylating tyrosine to DOPA (3,4-dihydroxyphenylalanine), also catalyzes the oxidation of DOPA to DOPA-quinone. The protein is Tyrosinase of Pelophylax lessonae (Pool frog).